Here is a 948-residue protein sequence, read N- to C-terminus: UvrABC system protein A (948 aa).

An ATP-binding site is contributed by 33 to 40; that stretch reads GLSGSGKS. A C4-type zinc finger spans residues 252–279; it reads CPICGFSIGELEPRMFSFNSPFGACPTC. ABC transporter domains follow at residues 309 to 587 and 607 to 935; these read WIPT…KKSL and ASDR…KYLK. 639–646 serves as a coordination point for ATP; sequence GVSGSGKS. Residues 738–764 form a C4-type zinc finger; it reads CEACKGDGIIKIEMHFLPDVYVPCEVC.

The protein belongs to the ABC transporter superfamily. UvrA family. Forms a heterotetramer with UvrB during the search for lesions.

The protein resides in the cytoplasm. In terms of biological role, the UvrABC repair system catalyzes the recognition and processing of DNA lesions. UvrA is an ATPase and a DNA-binding protein. A damage recognition complex composed of 2 UvrA and 2 UvrB subunits scans DNA for abnormalities. When the presence of a lesion has been verified by UvrB, the UvrA molecules dissociate. The protein is UvrABC system protein A of Staphylococcus aureus (strain MSSA476).